The following is a 370-amino-acid chain: Cobalt-precorrin-5B C(1)-methyltransferase (370 aa).

Belongs to the CbiD family.

The catalysed reaction is Co-precorrin-5B + S-adenosyl-L-methionine = Co-precorrin-6A + S-adenosyl-L-homocysteine. It functions in the pathway cofactor biosynthesis; adenosylcobalamin biosynthesis; cob(II)yrinate a,c-diamide from sirohydrochlorin (anaerobic route): step 6/10. Functionally, catalyzes the methylation of C-1 in cobalt-precorrin-5B to form cobalt-precorrin-6A. The sequence is that of Cobalt-precorrin-5B C(1)-methyltransferase from Pseudomonas syringae pv. syringae (strain B728a).